Consider the following 133-residue polypeptide: Acyl-CoA thioester hydrolase YciA (133 aa).

The 116-residue stretch at 8–123 (PQGELVLRTL…LFIYVAVDPD (116 aa)) folds into the HotDog ACOT-type domain.

This sequence belongs to the acyl coenzyme A hydrolase family.

Its function is as follows. Catalyzes the hydrolysis of the thioester bond in palmitoyl-CoA and malonyl-CoA. This Salmonella typhi protein is Acyl-CoA thioester hydrolase YciA (yciA).